The primary structure comprises 1217 residues: Nuclear matrix constituent protein 1 (1217 aa).

Residues 1–14 are compositionally biased toward polar residues; sequence MLTPQRSAWSLKSK. The disordered stretch occupies residues 1–45; it reads MLTPQRSAWSLKSKVSSEKPRSKGKGITKNLDSAATPFPPLGLLN. Residues 159-746 are a coiled coil; it reads VTDLEKALRE…KNQRAEFIKE (588 aa). The span at 892–904 shows a compositional bias: low complexity; it reads SEDAAANDNNPAA. Disordered regions lie at residues 892–969, 981–1057, 1087–1117, and 1152–1217; these read SEDA…VVDD, EEAK…VQAP, VQTKASHQASHDNNQISMGDDPALEGSHKVT, and ISEM…FFTT. The segment covering 947–960 has biased composition (basic residues); it reads STRRGRGGKTVRRT. Polar residues-rich tracts occupy residues 986-1007 and 1087-1103; these read SSQQNDEQSQGASVHTGGTSNT and VQTKASHQASHDNNQIS. Residues 1173–1186 show a composition bias toward low complexity; the sequence is EEPATPSSGSSTSG. Residues 1189-1200 are compositionally biased toward acidic residues; sequence GNDDDMDDDDEE.

It belongs to the CRWN family.

The protein localises to the nucleus matrix. It localises to the nucleus lamina. Functionally, architectural component of nuclear structure that plays different roles in controlling nuclear size and morphology. Involved in the organization of multimeric complexes in the peripheral nucleoskeleton. The protein is Nuclear matrix constituent protein 1 of Allium cepa (Onion).